A 639-amino-acid polypeptide reads, in one-letter code: Versicolorin B synthase stcN (639 aa).

Residues 1–19 (MPAWSLLVLSALPVVGMFA) form the signal peptide. FAD-binding positions include 77 to 78 (TA) and 98 to 99 (EA). N-linked (GlcNAc...) asparagine glycosylation occurs at N109. 164–167 (GAML) provides a ligand contact to FAD. N214 is a glycosylation site (N-linked (GlcNAc...) asparagine). The PAS domain occupies 263 to 301 (GFSNGQLLGRSYITHTIHPKTRRRDTASTSYLQTALRTS). 2 N-linked (GlcNAc...) asparagine glycosylation sites follow: N444 and N501. FAD-binding positions include A609 and 620-621 (PM).

The protein belongs to the GMC oxidoreductase family. As to quaternary structure, homodimer. FAD is required as a cofactor.

The protein resides in the cytoplasm. The protein localises to the cytosol. The enzyme catalyses (2S-3S)-versiconal hemiacetal = versicolorin B + H2O. It catalyses the reaction (S)-5'-oxoaverantin + H(+) = (1'S,5'S)-averufin + H2O. Its pathway is mycotoxin biosynthesis; sterigmatocystin biosynthesis. Functionally, norsolorinic acid reductase; part of the gene cluster that mediates the biosynthesis of sterigmatocystin (ST), a polyketide-derived furanocoumarin which is part of the most toxic and carcinogenic compounds among the known mycotoxins. The first step in the biosynthesis of sterigmatocystin is the production of hexanoate by the fatty acid synthase (FAS) units stcJ and stcK. The polyketide backbone is assembled by the non-reducing polyketide synthase stcA by condensation of the starter hexanoyl-CoA and 7 malonyl-CoA extender units followed by cyclization and release of norsolorinic acid. Norsolorinic acid is the first stable intermediate in the biosynthesis of sterigmatocystin and is converted into averantin (AVN) by the ketoreductase stcE which reduces the hexanoate ketone to an alcohol. Averantin is then oxidized into 5'-hydroxyaverantin (HAVN) by the cytochrome P450 monooxygenase stcF. 5'-hydroxyaverantin is further converted to 5'-oxyaverantin (OAVN) by the 5'-hydroxyaverantin dehydrogenase stcG. The next step is the conversion of OAVN into averufin (AVF) which is catalyzed by a yet to be identified enzyme. The cytochrome P450 monooxygenase stcB and the flavin-binding monooxygenase stcW are both required for the conversion of averufin to 1-hydroxyversicolorone. The esterase stcI probably catalyzes the formation of versiconal hemiacetal acetate from 1-hydroxyversicolorone. The oxydoreductase stcN then probably catalyzes the biosynthetic step from versiconal to versicolorin B (VERB). The next step is performed by the versicolorin B desaturase stcL to produce versicolorin A (VERA). The ketoreductase stcU and the cytochrome P450 monooxygenase stcS are involved in the conversion of versicolorin A to demethylsterigmatocystin. The Baeyer-Villiger oxidas stcQ and the reductase stcR might be involved in the biosynthetic step from versicolorin A to demethylsterigmatocystin. The final step in the biosynthesis of sterigmatocystin is the methylation of demethylsterigmatocystin catalyzed by the methyltransferase stcP. The sequence is that of Versicolorin B synthase stcN from Emericella nidulans (strain FGSC A4 / ATCC 38163 / CBS 112.46 / NRRL 194 / M139) (Aspergillus nidulans).